The primary structure comprises 224 residues: Putative adhesin RMA_1308 (224 aa).

An N-terminal signal peptide occupies residues Met-1 to Ala-22.

The chain is Putative adhesin RMA_1308 from Rickettsia massiliae (strain Mtu5).